Consider the following 628-residue polypeptide: MEYFSERYDVIVIGAGHAGCEAGLAAARMGCRTLMCTMNLDSIGFMPCNPNIGGTAKGHLVREIDALGGEMGVNIDATFIQSRMLNTSKGPAVHSLRAQADKRNYSGRMKSVLERQHNLDLKQLEVVGIRIDNEGKVCGVITKNGAYFETKTIVLSTGTYLKGKVIIGDVSYSSGPNGFMPANDLSQSLLDLGIEIRRFKTGTPARVNRRSVDFSKMIEQPGDKRIVPFSFMSENLDRKQVSCYLTYTTENTTKVIRENINRSPLFNGSIKSVGPRYCPSIEDKIVRFPNKENHQIFIEPEGEDTNELYVDGASTSMPEDVQIAMYRTIIGLENVEFLRTGYAIEYDCINPLQLRPTLEFKKVEGLFGAGQLNGSSGYEEAASQGIIAGINAALKVKGKEPFILKRSDAYIGVLIDDLVTKGTEEPYRMMTSRSEYRLILRQDNADLRLTEMGYKIGLVTKERYDKYLERKNSIETEIKRIKNLYITPKKEVIEFLNSLGSSELKKSISLYELIKRPELDYFKLQLLDMDRPELNEDVQEEVNIISKYEGYIKKQLEQVQQFKKFENKFIPENIDYDEIKGLRIEANQKLKKIRPISIGQASRISGVSPADISVLLVYLEKKHREKLL.

14–19 (GAGHAG) contributes to the FAD binding site. Residue 274-288 (GPRYCPSIEDKIVRF) participates in NAD(+) binding.

Belongs to the MnmG family. In terms of assembly, homodimer. Heterotetramer of two MnmE and two MnmG subunits. FAD serves as cofactor.

Its subcellular location is the cytoplasm. Its function is as follows. NAD-binding protein involved in the addition of a carboxymethylaminomethyl (cmnm) group at the wobble position (U34) of certain tRNAs, forming tRNA-cmnm(5)s(2)U34. This Clostridium kluyveri (strain ATCC 8527 / DSM 555 / NBRC 12016 / NCIMB 10680 / K1) protein is tRNA uridine 5-carboxymethylaminomethyl modification enzyme MnmG.